The chain runs to 471 residues: Chromosomal replication initiator protein DnaA (471 aa).

The interval 1–91 (MVDVSETTER…KYWQDESDAV (91 aa)) is domain I, interacts with DnaA modulators. The segment at 91–133 (VYSVDICVSDGVGVQPQMAEHPDGAVDGPPVVMVGGTYDHLSS) is domain II. The domain III, AAA+ region stretch occupies residues 134–352 (PLDPRFTFDN…GALNKVVAHS (219 aa)). 4 residues coordinate ATP: Gly180, Gly182, Lys183, and Thr184. The segment at 353 to 471 (SLVGRSVTIE…DINLLIRMLR (119 aa)) is domain IV, binds dsDNA.

The protein belongs to the DnaA family. Oligomerizes as a right-handed, spiral filament on DNA at oriC.

It is found in the cytoplasm. Functionally, plays an essential role in the initiation and regulation of chromosomal replication. ATP-DnaA binds to the origin of replication (oriC) to initiate formation of the DNA replication initiation complex once per cell cycle. Binds the DnaA box (a 9 base pair repeat at the origin) and separates the double-stranded (ds)DNA. Forms a right-handed helical filament on oriC DNA; dsDNA binds to the exterior of the filament while single-stranded (ss)DNA is stabiized in the filament's interior. The ATP-DnaA-oriC complex binds and stabilizes one strand of the AT-rich DNA unwinding element (DUE), permitting loading of DNA polymerase. After initiation quickly degrades to an ADP-DnaA complex that is not apt for DNA replication. Binds acidic phospholipids. The sequence is that of Chromosomal replication initiator protein DnaA from Anaplasma marginale (strain St. Maries).